The primary structure comprises 126 residues: Protein chibby homolog 1 (126 aa).

A compositionally biased stretch (polar residues) spans 1–10; sequence MPFFGNTFSP. The interval 1–26 is disordered; the sequence is MPFFGNTFSPKKTPPRKSASLSNLHS. A phosphoserine mark is found at S9 and S20. The minimal region for the interaction with PKD2 stretch occupies residues 60–112; it reads IAETGVSGGVDRREVQRLRRRNQQLEEENNLLRLKVDILLDMLSESTAESHLM. Residues 67-125 are a coiled coil; the sequence is GGVDRREVQRLRRRNQQLEEENNLLRLKVDILLDMLSESTAESHLMEKELDELRISRKR. A leucine-zipper; mediates homodimerization region spans residues 77–98; sequence LRRRNQQLEEENNLLRLKVDIL.

This sequence belongs to the chibby family. As to quaternary structure, homodimer. Homodimerization is essential for nuclear localization and interaction with KPNA4 but is dispensable for interaction with CTNNB1. Interacts with polycystin-2/PKD2 and GM130. Interacts with the C-terminal region of CTNNB1. Interacts (C-terminus) with TCIM (C-terminus), TCIM competes with CTNNB1 for the interaction with CBY1. Interacts with FAM92A; this interaction facilitates targeting of FAM92A to cilium basal body. Interacts with CIBAR2. Interacts with KPNA4. Widely expressed. Expressed at higher levels in heart, skeletal muscle, kidney and placenta. Also found in brain, lung, liver and testis. Significantly down-regulated in thyroid and metastatic uterine tumors.

It is found in the nucleus speckle. Its subcellular location is the cytoplasm. The protein localises to the cytoskeleton. It localises to the cilium basal body. The protein resides in the microtubule organizing center. It is found in the centrosome. Its subcellular location is the centriole. The protein localises to the golgi apparatus. It localises to the trans-Golgi network. The protein resides in the cell projection. It is found in the cilium. Its subcellular location is the flagellum. The protein localises to the nucleus. In terms of biological role, inhibits the Wnt/Wingless pathway by binding to CTNNB1/beta-catenin and inhibiting beta-catenin-mediated transcriptional activation through competition with TCF/LEF transcription factors. Has also been shown to play a role in regulating the intracellular trafficking of polycystin-2/PKD2 and possibly of other intracellular proteins. Promotes adipocyte and cardiomyocyte differentiation. This chain is Protein chibby homolog 1 (CBY1), found in Homo sapiens (Human).